The primary structure comprises 32 residues: Cytochrome b6-f complex subunit 7 (32 aa).

Residues 9 to 27 (AAVFWILIPIGLVGGALLL) traverse the membrane as a helical segment.

It belongs to the PetM family. The 4 large subunits of the cytochrome b6-f complex are cytochrome b6, subunit IV (17 kDa polypeptide, PetD), cytochrome f and the Rieske protein, while the 4 small subunits are PetG, PetL, PetM and PetN. The complex functions as a dimer.

Its subcellular location is the cellular thylakoid membrane. Its function is as follows. Component of the cytochrome b6-f complex, which mediates electron transfer between photosystem II (PSII) and photosystem I (PSI), cyclic electron flow around PSI, and state transitions. In Prochlorococcus marinus (strain MIT 9301), this protein is Cytochrome b6-f complex subunit 7.